The following is a 148-amino-acid chain: 3-dehydroquinate dehydratase (148 aa).

Tyr24 functions as the Proton acceptor in the catalytic mechanism. Residues Asn75, His81, and Asp88 each contribute to the substrate site. Residue His101 is the Proton donor of the active site. Residues 102–103 and Arg112 contribute to the substrate site; that span reads LS.

The protein belongs to the type-II 3-dehydroquinase family. Homododecamer.

It catalyses the reaction 3-dehydroquinate = 3-dehydroshikimate + H2O. It participates in metabolic intermediate biosynthesis; chorismate biosynthesis; chorismate from D-erythrose 4-phosphate and phosphoenolpyruvate: step 3/7. Functionally, catalyzes a trans-dehydration via an enolate intermediate. This is 3-dehydroquinate dehydratase from Bartonella henselae (strain ATCC 49882 / DSM 28221 / CCUG 30454 / Houston 1) (Rochalimaea henselae).